Here is a 242-residue protein sequence, read N- to C-terminus: Phosphoribosylaminoimidazole-succinocarboxamide synthase (242 aa).

It belongs to the SAICAR synthetase family.

It carries out the reaction 5-amino-1-(5-phospho-D-ribosyl)imidazole-4-carboxylate + L-aspartate + ATP = (2S)-2-[5-amino-1-(5-phospho-beta-D-ribosyl)imidazole-4-carboxamido]succinate + ADP + phosphate + 2 H(+). Its pathway is purine metabolism; IMP biosynthesis via de novo pathway; 5-amino-1-(5-phospho-D-ribosyl)imidazole-4-carboxamide from 5-amino-1-(5-phospho-D-ribosyl)imidazole-4-carboxylate: step 1/2. In Magnetococcus marinus (strain ATCC BAA-1437 / JCM 17883 / MC-1), this protein is Phosphoribosylaminoimidazole-succinocarboxamide synthase.